The primary structure comprises 428 residues: 3-phosphoshikimate 1-carboxyvinyltransferase (428 aa).

3-phosphoshikimate is bound by residues lysine 21, serine 22, and arginine 26. Phosphoenolpyruvate is bound at residue lysine 21. Residues glycine 91 and arginine 119 each contribute to the phosphoenolpyruvate site. Residues serine 164, glutamine 166, aspartate 311, and lysine 338 each coordinate 3-phosphoshikimate. Phosphoenolpyruvate is bound at residue glutamine 166. The active-site Proton acceptor is aspartate 311. The phosphoenolpyruvate site is built by arginine 342 and arginine 383.

Belongs to the EPSP synthase family. As to quaternary structure, monomer.

The protein localises to the cytoplasm. The catalysed reaction is 3-phosphoshikimate + phosphoenolpyruvate = 5-O-(1-carboxyvinyl)-3-phosphoshikimate + phosphate. It participates in metabolic intermediate biosynthesis; chorismate biosynthesis; chorismate from D-erythrose 4-phosphate and phosphoenolpyruvate: step 6/7. Its function is as follows. Catalyzes the transfer of the enolpyruvyl moiety of phosphoenolpyruvate (PEP) to the 5-hydroxyl of shikimate-3-phosphate (S3P) to produce enolpyruvyl shikimate-3-phosphate and inorganic phosphate. In Campylobacter concisus (strain 13826), this protein is 3-phosphoshikimate 1-carboxyvinyltransferase.